Here is a 414-residue protein sequence, read N- to C-terminus: Transcriptional repressor protein YY1 (414 aa).

The segment at 1-170 (MASGDTLYIA…GGGSSSSGGG (170 aa)) is interaction with the SMAD1/SMAD4 complex. The interval 33–81 (VETIETTVVGEEEEEDDDDEDGGGGDHGGGGGHGHAGHHHHHHHHHHHP) is disordered. Residues 42 to 55 (GEEEEEDDDDEDGG) are compositionally biased toward acidic residues. Positions 57–66 (GDHGGGGGHG) are enriched in gly residues. The span at 67–81 (HAGHHHHHHHHHHHP) shows a compositional bias: basic residues. The segment at 116 to 260 (DDSDGLRAED…YSEYMTGKKL (145 aa)) is gly-rich region involved in interaction with HCFC1. S118 is subject to Phosphoserine; by CK2. The segment at 157-203 (GKSGGGGSSSSGGGRVKKGGGKKSGKKSYLSGGAGAAGGGGADPGNK) is disordered. A compositionally biased stretch (gly residues) spans 158 to 170 (KSGGGGSSSSGGG). Basic residues predominate over residues 171–182 (RVKKGGGKKSGK). Residues K182 and K183 each participate in a glycyl lysine isopeptide (Lys-Gly) (interchain with G-Cter in SUMO2) cross-link. A Phosphoserine modification is found at S187. The span at 188-199 (GGAGAAGGGGAD) shows a compositional bias: gly residues. Residues K208 and K230 each participate in a glycyl lysine isopeptide (Lys-Gly) (interchain with G-Cter in SUMO2) cross-link. S247 carries the post-translational modification Phosphoserine. Residues 257–341 (GKKLPPGGIP…KAFVESSKLK (85 aa)) are involved in nuclear matrix association. Residues K286 and K288 each participate in a glycyl lysine isopeptide (Lys-Gly) (interchain with G-Cter in SUMO2) cross-link. Residues 295 to 414 (TIACPHKGCT…LTHAKAKNNQ (120 aa)) are binding to DNA. 3 consecutive C2H2-type zinc fingers follow at residues 296 to 320 (IACP…LHTH), 325 to 347 (HVCA…QLVH), and 353 to 377 (FQCT…VRIH). C298, C303, H316, H320, C327, C330, H343, H347, C355, C360, H373, and H377 together coordinate Zn(2+). Residues 333–371 (AFVESSKLKRHQLVHTGEKPFQCTFEGCGKRFSLDFNLR) are involved in repression of activated transcription. The segment at 371–397 (RTHVRIHTGDRPYVCPFDGCNKKFAQS) is involved in masking transactivation domain. T378 bears the Phosphothreonine mark. The C2H2-type 4 zinc finger occupies 383 to 407 (YVCPFDGCNKKFAQSTNLKSHILTH). Zn(2+) is bound by residues C385, C390, H403, and H407. Residues K409 and K411 each participate in a glycyl lysine isopeptide (Lys-Gly) (interchain with G-Cter in SUMO2) cross-link.

This sequence belongs to the YY transcription factor family. Interacts with YAF2 through the region encompassing the first and second zinc fingers. Component of the chromatin remodeling INO80 complex; specifically part of a complex module associated with the DBINO domain of INO80. Interacts with EED and EZH2; the interactions are indicative for an association with the PRC2/EED-EZH2 complex. Interacts with SFMBT2. Found in a complex with SMAD1 and SMAD4. Found in a complex with YY1, SIN3A and HDAC1. Accessory component of the polycomb repressive deubiquitinase (PR-DUB) complex, at least composed of BAP1, one of ASXL1, ASXL2 or (probably) ASXL3 and one of MBD5 or MBD6; the PR-DUB core associates with a number of accessory proteins, including FOXK1, FOXK2, KDM1B, HCFC1, YY1 and OGT. Interacts (via Gly-rich region) with HCFC1; the interaction is direct. Interacts (via C-terminal zinc-finger domains) with BAP1 (via ULD domain); the interaction is direct and requires HCFC1. In terms of processing, phosphorylation at Ser-118 by CK2 prevents proteolytic cleavage by caspase-7 (CASP7) during apoptosis. Post-translationally, proteolytically cleaved by caspase-7 (CASP7) in response to apoptosis. Phosphorylation at Ser-118 protects against proteolytic cleavage. Transiently poly-ADP-ribosylated by PARP1 upon DNA damage, with the effect of decreasing affinity of YY1 to its cognate DNA binding sites. In terms of processing, ubiquitinated.

It localises to the nucleus matrix. In terms of biological role, multifunctional transcription factor that exhibits positive and negative control on a large number of cellular and viral genes by binding to sites overlapping the transcription start site. Binds to the consensus sequence 5'-CCGCCATNTT-3'; some genes have been shown to contain a longer binding motif allowing enhanced binding; the initial CG dinucleotide can be methylated greatly reducing the binding affinity. The effect on transcription regulation is depending upon the context in which it binds and diverse mechanisms of action include direct activation or repression, indirect activation or repression via cofactor recruitment, or activation or repression by disruption of binding sites or conformational DNA changes. Its activity is regulated by transcription factors and cytoplasmic proteins that have been shown to abrogate or completely inhibit YY1-mediated activation or repression. For example, it acts as a repressor in absence of adenovirus E1A protein but as an activator in its presence. Acts synergistically with the SMAD1 and SMAD4 in bone morphogenetic protein (BMP)-mediated cardiac-specific gene expression. Binds to SMAD binding elements (SBEs) (5'-GTCT/AGAC-3') within BMP response element (BMPRE) of cardiac activating regions. May play an important role in development and differentiation. Proposed to recruit the PRC2/EED-EZH2 complex to target genes that are transcriptional repressed. Involved in DNA repair. In vitro, binds to DNA recombination intermediate structures (Holliday junctions). Plays a role in regulating enhancer activation. Recruits the PR-DUB complex to specific gene-regulatory regions. Functionally, proposed core component of the chromatin remodeling INO80 complex which is involved in transcriptional regulation, DNA replication and probably DNA repair; proposed to target the INO80 complex to YY1-responsive elements. The polypeptide is Transcriptional repressor protein YY1 (YY1) (Homo sapiens (Human)).